Reading from the N-terminus, the 133-residue chain is Peptidyl-prolyl cis-trans isomerase PIN4 (133 aa).

Positions 1 to 29 (MGKNDKKGADKGGKAKGGDKGKDAKDTKD) are enriched in basic and acidic residues. The segment at 1 to 42 (MGKNDKKGADKGGKAKGGDKGKDAKDTKDSGSGGKAKGAQSI) is disordered. Residues 39-131 (AQSINVRHIL…FGYHIIMVEG (93 aa)) enclose the PpiC domain.

This sequence belongs to the PpiC/parvulin rotamase family. PIN4 subfamily.

It carries out the reaction [protein]-peptidylproline (omega=180) = [protein]-peptidylproline (omega=0). Its function is as follows. PPIases accelerate the folding of proteins. It catalyzes the cis-trans isomerization of proline imidic peptide bonds in oligopeptides. This is Peptidyl-prolyl cis-trans isomerase PIN4 (PIN4) from Gibberella zeae (strain ATCC MYA-4620 / CBS 123657 / FGSC 9075 / NRRL 31084 / PH-1) (Wheat head blight fungus).